Reading from the N-terminus, the 256-residue chain is 5-keto-4-deoxy-D-glucarate aldolase (256 aa).

The active-site Proton acceptor is histidine 50. Residue glutamine 151 participates in substrate binding. Position 153 (glutamate 153) interacts with Mg(2+). The substrate site is built by serine 178 and aspartate 179. Aspartate 179 is a Mg(2+) binding site.

Belongs to the HpcH/HpaI aldolase family. KDGluc aldolase subfamily. Homohexamer; trimer of dimers. The cofactor is Mg(2+).

The catalysed reaction is 5-dehydro-4-deoxy-D-glucarate = 2-hydroxy-3-oxopropanoate + pyruvate. The enzyme catalyses 2-dehydro-3-deoxy-D-glucarate = 2-hydroxy-3-oxopropanoate + pyruvate. It functions in the pathway carbohydrate acid metabolism; galactarate degradation; D-glycerate from galactarate: step 2/3. Catalyzes the reversible retro-aldol cleavage of both 5-keto-4-deoxy-D-glucarate and 2-keto-3-deoxy-D-glucarate to pyruvate and tartronic semialdehyde. This is 5-keto-4-deoxy-D-glucarate aldolase from Salmonella agona (strain SL483).